A 528-amino-acid polypeptide reads, in one-letter code: MKVIFMKADLNLIKTLHPLEIKVIVNNEEEDDISASIIIEKLGFNEGQANKTIEWLNSKGIIEEIYRKLNVFYKATERGLGALRDGFVEEKIINLVSQKAVLASNLALELDIDVKEVRKAFGNLLKEGILSLDLDKQIIINCLDGTETNYQKVRVLLERAKNSDLLRESLTTEELLLISNFAKKKGADSVFFKIIEKLDLKFRLSSFGLEVKNFLMKSKLTGDELTKLTPEILKNKTYENKKFRAYNIHIPSAKTFIGRANSYLDYISKIKDKLVGLGFQEFDGPLVETEFFNNDALFMPQFHPSRDIKDVYYISDPSMQESLPEPYFSNVKLAHETGYATGSRGWRYSFSEDLSKRLVLRTHGTVLSAKQLINAKNPSRYFGVIRCFRYDQVDATHGVDFYQTEGIVIEDGVSIKTLLGLLEIFAKELAGATEIKYVPAYFPFTEPSIEIHVKHPVLGWFELGGSGIFRPEVTKPLGIDLPVIAWGIGIDRMALMHLGLNDLRDLFTYDIGDVILRRGKIDAKVRNL.

Thr-365 and Phe-444 together coordinate L-phenylalanine. Glu-446 is a binding site for Mg(2+). L-phenylalanine is bound at residue Phe-469.

It belongs to the class-II aminoacyl-tRNA synthetase family. Phe-tRNA synthetase alpha subunit type 2 subfamily. Tetramer of two alpha and two beta subunits. Mg(2+) is required as a cofactor.

The protein localises to the cytoplasm. The catalysed reaction is tRNA(Phe) + L-phenylalanine + ATP = L-phenylalanyl-tRNA(Phe) + AMP + diphosphate + H(+). The sequence is that of Phenylalanine--tRNA ligase alpha subunit from Borreliella burgdorferi (strain ATCC 35210 / DSM 4680 / CIP 102532 / B31) (Borrelia burgdorferi).